The sequence spans 127 residues: Small ribosomal subunit protein uS12m (127 aa).

It belongs to the universal ribosomal protein uS12 family.

The protein resides in the mitochondrion. Its function is as follows. Protein S12 is involved in the translation initiation step. This Chondrus crispus (Carrageen Irish moss) protein is Small ribosomal subunit protein uS12m (RPS12).